The chain runs to 788 residues: Serine/threonine-protein kinase MARK2 (788 aa).

The tract at residues 1-46 (MSSARTPLPTLNERDTEQPTLGHLDSKPSSKSNMIRGRNSATSADE) is disordered. Polar residues predominate over residues 27-45 (KPSSKSNMIRGRNSATSAD). A Phosphoserine modification is found at S40. A Protein kinase domain is found at 53-304 (YRLLKTIGKG…LEQIMKDRWM (252 aa)). T58 carries the phosphothreonine; by autocatalysis modification. ATP is bound by residues 59-67 (IGKGNFAKV) and K82. Phosphoserine; by CaMK1 is present on residues S91, S92, and S93. The active-site Proton acceptor is the D175. T208 is modified (phosphothreonine; by LKB1 and TAOK1). S212 bears the Phosphoserine; by GSK3-beta mark. S274 bears the Phosphoserine; by autocatalysis mark. T275 bears the Phosphothreonine; by autocatalysis mark. T294 carries the phosphothreonine; by CaMK1 modification. In terms of domain architecture, UBA spans 323–362 (YKDPRRTELMVSMGYTREEIQDSLVGQRYNEVMATYLLLG). Residues 373 to 632 (ITLKPRPSAD…HSQGRRGASG (260 aa)) are disordered. Phosphoserine occurs at positions 376 and 409. Residues 418-432 (PTSNSYSKKTQSNNA) show a composition bias toward polar residues. The segment covering 433 to 445 (ENKRPEEDRESGR) has biased composition (basic and acidic residues). The residue at position 456 (S456) is a Phosphoserine. Position 467 is a phosphothreonine (T467). Residues 467–486 (TPTPSTNSVLSTSTNRSRNS) show a composition bias toward polar residues. A phosphoserine mark is found at S486 and S493. Residues 495 to 504 (GQASIQNGKD) are compositionally biased toward polar residues. Residues 511–525 (SRASTASASAAVSAA) show a composition bias toward low complexity. Phosphoserine occurs at positions 569, 571, and 592. A Phosphothreonine; by PKC/PRKCZ modification is found at T596. 2 positions are modified to phosphoserine: S619 and S722. The KA1 domain maps to 739–788 (TPGHEDFVQWEMEVCKLPRLSLNGVRFKRISGTSMAFKNIASKIANELKL).

It belongs to the protein kinase superfamily. CAMK Ser/Thr protein kinase family. SNF1 subfamily. Homodimer. Interacts with PAK5; leading to inhibit the protein kinase activity. Interacts with MAPT/TAU. Interacts with MTCL1 isoform 1; the interaction is direct and increases MARK2 microtubule-binding ability. Interacts (when phosphorylated at Thr-596) with YWHAZ. Interacts with YWHAB, YWHAG and YWHAQ. In terms of assembly, (Microbial infection) In case of infection, interacts with H.pylori CagA, leading to inhibit kinase activity and junctional and polarity defects. Requires Mg(2+) as cofactor. Autophosphorylated. Phosphorylated at Thr-208 by STK11/LKB1 in complex with STE20-related adapter-alpha (STRADA) pseudo kinase and CAB39. Phosphorylation at Thr-208 by TAOK1 activates the kinase activity, leading to phosphorylation and detachment of MAPT/TAU from microtubules. Phosphorylation at Ser-212 by GSK3-beta (GSK3B) inhibits the kinase activity. Phosphorylation by CaMK1 promotes activity and is required to promote neurite outgrowth. Phosphorylation at Thr-596 by PRKCZ/aPKC in polarized epithelial cells inhibits the kinase activity and promotes binding to 14-3-3 protein YWHAZ, leading to relocation from cell membrane to cytoplasm. In terms of tissue distribution, high levels of expression in heart, brain, skeletal muscle and pancreas, lower levels observed in lung, liver and kidney.

The protein localises to the cell membrane. Its subcellular location is the cytoplasm. The protein resides in the lateral cell membrane. It localises to the cytoskeleton. It is found in the cell projection. The protein localises to the dendrite. The enzyme catalyses L-seryl-[protein] + ATP = O-phospho-L-seryl-[protein] + ADP + H(+). The catalysed reaction is L-threonyl-[protein] + ATP = O-phospho-L-threonyl-[protein] + ADP + H(+). It catalyses the reaction L-seryl-[tau protein] + ATP = O-phospho-L-seryl-[tau protein] + ADP + H(+). It carries out the reaction L-threonyl-[tau protein] + ATP = O-phospho-L-threonyl-[tau protein] + ADP + H(+). With respect to regulation, inhibited by PAK5; inhibition is independent of the kinase activity of PAK5. Activated by phosphorylation on Thr-208. Inhibited by phosphorylation at Ser-212 and Thr-596. Inhibited by hymenialdisine. Specifically inhibited by the H.pylori CagA peptide FPLKRHDKVDDLSK that mimics host substrates and binds to the kinase substrate-binding site. Serine/threonine-protein kinase. Involved in cell polarity and microtubule dynamics regulation. Phosphorylates CRTC2/TORC2, DCX, HDAC7, KIF13B, MAP2, MAP4 and RAB11FIP2. Phosphorylates the microtubule-associated protein MAPT/TAU. Plays a key role in cell polarity by phosphorylating the microtubule-associated proteins MAP2, MAP4 and MAPT/TAU at KXGS motifs, causing detachment from microtubules, and their disassembly. Regulates epithelial cell polarity by phosphorylating RAB11FIP2. Involved in the regulation of neuronal migration through its dual activities in regulating cellular polarity and microtubule dynamics, possibly by phosphorylating and regulating DCX. Regulates axogenesis by phosphorylating KIF13B, promoting interaction between KIF13B and 14-3-3 and inhibiting microtubule-dependent accumulation of KIF13B. Also required for neurite outgrowth and establishment of neuronal polarity. Regulates localization and activity of some histone deacetylases by mediating phosphorylation of HDAC7, promoting subsequent interaction between HDAC7 and 14-3-3 and export from the nucleus. Also acts as a positive regulator of the Wnt signaling pathway, probably by mediating phosphorylation of dishevelled proteins (DVL1, DVL2 and/or DVL3). Modulates the developmental decision to build a columnar versus a hepatic epithelial cell apparently by promoting a switch from a direct to a transcytotic mode of apical protein delivery. Essential for the asymmetric development of membrane domains of polarized epithelial cells. This chain is Serine/threonine-protein kinase MARK2, found in Homo sapiens (Human).